The chain runs to 140 residues: Cytochrome b (140 aa).

Residues 38–58 traverse the membrane as a helical segment; that stretch reads FFALHFLLPFVLAALVIMHLI. 2 residues coordinate heme b: His-42 and His-56. Residue His-61 coordinates a ubiquinone. A helical membrane pass occupies residues 85-105; sequence FVFKDLVTIFIFFIVLSIFVF.

This sequence belongs to the cytochrome b family. As to quaternary structure, fungal cytochrome b-c1 complex contains 10 subunits; 3 respiratory subunits, 2 core proteins and 5 low-molecular weight proteins. Cytochrome b-c1 complex is a homodimer. Heme b is required as a cofactor.

It localises to the mitochondrion inner membrane. Its function is as follows. Component of the ubiquinol-cytochrome c reductase complex (complex III or cytochrome b-c1 complex) that is part of the mitochondrial respiratory chain. The b-c1 complex mediates electron transfer from ubiquinol to cytochrome c. Contributes to the generation of a proton gradient across the mitochondrial membrane that is then used for ATP synthesis. This Aspergillus terreus protein is Cytochrome b (cob).